Consider the following 122-residue polypeptide: Large ribosomal subunit protein uL14 (122 aa).

Belongs to the universal ribosomal protein uL14 family. Part of the 50S ribosomal subunit. Forms a cluster with proteins L3 and L19. In the 70S ribosome, L14 and L19 interact and together make contacts with the 16S rRNA in bridges B5 and B8.

Its function is as follows. Binds to 23S rRNA. Forms part of two intersubunit bridges in the 70S ribosome. The protein is Large ribosomal subunit protein uL14 of Kocuria rhizophila (strain ATCC 9341 / DSM 348 / NBRC 103217 / DC2201).